Here is a 433-residue protein sequence, read N- to C-terminus: Enolase (433 aa).

Residue Gln-167 coordinates (2R)-2-phosphoglycerate. The active-site Proton donor is Glu-209. Asp-246, Glu-291, and Asp-318 together coordinate Mg(2+). Positions 343, 372, 373, and 394 each coordinate (2R)-2-phosphoglycerate. Lys-343 (proton acceptor) is an active-site residue.

It belongs to the enolase family. In terms of assembly, component of the RNA degradosome, a multiprotein complex involved in RNA processing and mRNA degradation. Mg(2+) is required as a cofactor.

Its subcellular location is the cytoplasm. The protein resides in the secreted. The protein localises to the cell surface. The catalysed reaction is (2R)-2-phosphoglycerate = phosphoenolpyruvate + H2O. Its pathway is carbohydrate degradation; glycolysis; pyruvate from D-glyceraldehyde 3-phosphate: step 4/5. In terms of biological role, catalyzes the reversible conversion of 2-phosphoglycerate (2-PG) into phosphoenolpyruvate (PEP). It is essential for the degradation of carbohydrates via glycolysis. The polypeptide is Enolase (Shewanella frigidimarina (strain NCIMB 400)).